The chain runs to 352 residues: 4-hydroxy-3-methylbut-2-en-1-yl diphosphate synthase (flavodoxin) (352 aa).

Residues C262, C265, C297, and E304 each contribute to the [4Fe-4S] cluster site.

It belongs to the IspG family. [4Fe-4S] cluster serves as cofactor.

It catalyses the reaction (2E)-4-hydroxy-3-methylbut-2-enyl diphosphate + oxidized [flavodoxin] + H2O + 2 H(+) = 2-C-methyl-D-erythritol 2,4-cyclic diphosphate + reduced [flavodoxin]. Its pathway is isoprenoid biosynthesis; isopentenyl diphosphate biosynthesis via DXP pathway; isopentenyl diphosphate from 1-deoxy-D-xylulose 5-phosphate: step 5/6. In terms of biological role, converts 2C-methyl-D-erythritol 2,4-cyclodiphosphate (ME-2,4cPP) into 1-hydroxy-2-methyl-2-(E)-butenyl 4-diphosphate. In Nitratiruptor sp. (strain SB155-2), this protein is 4-hydroxy-3-methylbut-2-en-1-yl diphosphate synthase (flavodoxin).